Here is a 275-residue protein sequence, read N- to C-terminus: Nurim (275 aa).

The Nuclear segment spans residues Met-1–Val-4. The chain crosses the membrane as a helical span at residues Thr-5–Phe-32. The Perinuclear space segment spans residues Val-33–Val-63. A helical membrane pass occupies residues Val-64–Leu-85. The Nuclear segment spans residues Ala-86 to Ser-102. A helical transmembrane segment spans residues Arg-103–His-119. The Perinuclear space segment spans residues Tyr-120–Trp-138. The helical transmembrane segment at Glu-139 to Leu-169 threads the bilayer. The Nuclear segment spans residues Leu-170–Leu-196. A helical transmembrane segment spans residues Tyr-197–Leu-215. Residues Pro-216–Asp-221 are Perinuclear space-facing. The helical transmembrane segment at Arg-222–Leu-239 threads the bilayer. Topologically, residues Asp-240–Glu-275 are nuclear.

The protein belongs to the nurim family.

The protein resides in the nucleus inner membrane. The chain is Nurim (nrm) from Danio rerio (Zebrafish).